Consider the following 481-residue polypeptide: Cobyric acid synthase (481 aa).

A GATase cobBQ-type domain is found at 249–436 (GLHIVCLRLS…LHGMFRDDAF (188 aa)). The Nucleophile role is filled by cysteine 331. Residue histidine 428 is part of the active site.

Belongs to the CobB/CobQ family. CobQ subfamily.

The protein operates within cofactor biosynthesis; adenosylcobalamin biosynthesis. Catalyzes amidations at positions B, D, E, and G on adenosylcobyrinic A,C-diamide. NH(2) groups are provided by glutamine, and one molecule of ATP is hydrogenolyzed for each amidation. The protein is Cobyric acid synthase of Jannaschia sp. (strain CCS1).